An 853-amino-acid polypeptide reads, in one-letter code: Vacuolar protein sorting-associated protein 41 homolog (853 aa).

Residues 1–25 are compositionally biased toward acidic residues; it reads MAEAEEQETESLEESTDESEEESEE. A disordered region spans residues 1–32; the sequence is MAEAEEQETESLEESTDESEEESEEEPKLKYE. Positions 1-539 are interaction with ARL8B; that stretch reads MAEAEEQETE…YLTLRHKDVF (539 aa). Residues 567-711 form a CHCR repeat; it reads VDMLLDNEDK…SIDKPPFITG (145 aa). The RING-type; atypical zinc-finger motif lies at 790 to 838; the sequence is CESCLSPILPTDAAKPFSVVVFHCRHMFHKECLPMPSMNAPAQYCNICS.

Belongs to the VPS41 family. As to quaternary structure, component of the putative homotypic fusion and vacuole protein sorting (HOPS) complex; the core of which composed of the class C Vps proteins VPS11, VPS16, VPS18 and VPS33A, is associated with VPS39 and VPS41. Interacts with RILP, MON1B. Interacts with ARL8B (GTP-bound form); involved in recruitment to lysosomes and probably hierarchial assembly of the HOPS complex at lysosomal membranes. In vitro can self-assemble into a lattice. Associates with adapter protein complex 3 (AP-3) and clathrin:AP-3 complexes. Interacts with STX17; this interaction is increased in the absence of TMEM39A. Interacts with ARL8B and PLEKHM1; the interaction mediates the recruitment of the HOPS complex to lysosomes. Interacts with RAB7, RAB2A and RAB2B. Interacts with RAB39A (GTP-bound) and RAB39B (GTP-bound); interaction with RAB39A leads to a functional HOPS complex that mediates autophagosome-lysosome membrane tethering.

It localises to the endosome membrane. The protein resides in the late endosome membrane. Its subcellular location is the early endosome membrane. The protein localises to the lysosome membrane. It is found in the golgi apparatus. It localises to the trans-Golgi network. The protein resides in the cytoplasmic vesicle. Its subcellular location is the clathrin-coated vesicle. The protein localises to the cytoplasm. It is found in the cytosol. In terms of biological role, plays a role in vesicle-mediated protein trafficking to lysosomal compartments including the endocytic membrane transport and autophagic pathways. Believed to act in part as a core component of the putative HOPS endosomal tethering complex is proposed to be involved in the Rab5-to-Rab7 endosome conversion probably implicating MON1A/B, and via binding SNAREs and SNARE complexes to mediate tethering and docking events during SNARE-mediated membrane fusion. The HOPS complex is proposed to be recruited to Rab7 on the late endosomal membrane and to regulate late endocytic, phagocytic and autophagic traffic towards lysosomes. Involved in homotypic vesicle fusions between late endosomes and in heterotypic fusions between late endosomes and lysosomes implicated in degradation of endocytosed cargo. Required for fusion of autophagosomes with lysosomes. Links the HOPS complex to endosomal via its association with RILP and to lysosomal membranes via its association with ARL8B, suggesting that these interactions may bring the compartments to close proximity for fusion. Involved in the direct trans-Golgi network to late endosomes transport of lysosomal membrane proteins independently of HOPS. Involved in sorting to the regulated secretory pathway presumably implicating the AP-3 adapter complex. May play a role in HOPS-independent function in the regulated secretory pathway. This is Vacuolar protein sorting-associated protein 41 homolog (Vps41) from Mus musculus (Mouse).